The sequence spans 757 residues: Inhibitor of nuclear factor kappa-B kinase subunit beta (757 aa).

A Protein kinase domain is found at 15 to 300; that stretch reads WEMKERLGTG…DPQYGPNGCF (286 aa). ATP-binding positions include 21-29 and lysine 44; that span reads LGTGGFGNV. The active-site Proton acceptor is aspartate 145. Lysine 163 participates in a covalent cross-link: Glycyl lysine isopeptide (Lys-Gly) (interchain with G-Cter in ubiquitin). At serine 177 the chain carries Phosphoserine; by TBK1 and PKC/PRKCZ. Residue cysteine 179 is modified to S-nitrosocysteine. Residue serine 181 is modified to Phosphoserine; by TBK1, PKC/PRKCZ and PDPK1. Proline 191 is subject to Hydroxyproline. A leucine-zipper region spans residues 458–479; it reads LLRNNSCLSKMKNAMASTAQQL. Serine 670 is subject to Phosphoserine; by autocatalysis. A Phosphoserine modification is found at serine 672. Residues serine 675, serine 682, serine 689, serine 692, serine 697, serine 705, serine 733, and serine 740 each carry the phosphoserine; by autocatalysis modification. Positions 682–703 are disordered; sequence SHPGHLMSQPSSACDSLPDSDK. The tract at residues 737 to 742 is NEMO-binding; the sequence is LDWSWL.

Belongs to the protein kinase superfamily. Ser/Thr protein kinase family. I-kappa-B kinase subfamily. As to quaternary structure, component of the I-kappa-B-kinase (IKK) core complex consisting of CHUK, IKBKB and IKBKG; probably four alpha/CHUK-beta/IKBKB dimers are associated with four gamma/IKBKG subunits. The IKK core complex seems to associate with regulatory or adapter proteins to form a IKK-signalosome holo-complex. The IKK complex associates with TERF2IP/RAP1, leading to promote IKK-mediated phosphorylation of RELA/p65. Part of a complex composed of NCOA2, NCOA3, CHUK/IKKA, IKBKB, IKBKG and CREBBP. Part of a 70-90 kDa complex at least consisting of CHUK/IKKA, IKBKB, NFKBIA, RELA, ELP1 and MAP3K14. Found in a membrane raft complex, at least composed of BCL10, CARD11, DPP4 and IKBKB. Interacts with SQSTM1 through PRKCZ or PRKCI. Forms an NGF-induced complex with IKBKB, PRKCI and TRAF6. May interact with MAVS/IPS1. Interacts with NALP2. Interacts with TICAM1. Interacts with FAF1; the interaction disrupts the IKK complex formation. Interacts with ATM. Part of a ternary complex consisting of TANK, IKBKB and IKBKG. Interacts with NIBP; the interaction is direct. Interacts with ARRB1 and ARRB2. Interacts with TRIM21. Interacts with NLRC5; prevents IKBKB phosphorylation and kinase activity. Interacts with PDPK1. Interacts with EIF2AK2/PKR. The phosphorylated form interacts with PPM1A and PPM1B. Interacts with ZNF268 isoform 2; the interaction is further increased in a TNF-alpha-dependent manner. Interacts with IKBKE. Interacts with ZC3H12A. Interacts with AKAP13. Interacts with LRRC14; disrupts IKBKB-IKBKG interaction preventing I-kappa-B-kinase (IKK) core complex formation and leading to a decrease of IKBKB phosphorylation and NF-kappaB activation. Interacts with SASH1. Interacts with ARFIP2. Interacts with FKBP5. Upon cytokine stimulation, phosphorylated on Ser-177 and Ser-181 by MEKK1 and/or MAP3K14/NIK as well as TBK1 and PRKCZ; which enhances activity. Phosphorylated by MAP3K7/TAK1 in response to NOD1 and NOD2 signaling, promoting activation and phosphorylation of NF-kappa-B inhibitors, leading to NF-kappa-B activation. Once activated, autophosphorylates on the C-terminal serine cluster; which decreases activity and prevents prolonged activation of the inflammatory response. Phosphorylated by the IKK-related kinases TBK1 and IKBKE, which is associated with reduced CHUK/IKKA and IKBKB activity and NF-kappa-B-dependent gene transcription. Dephosphorylated at Ser-177 and Ser-181 by PPM1A and PPM1B. In terms of processing, ubiquitinated. Monoubiquitination involves TRIM21 that leads to inhibition of Tax-induced NF-kappa-B signaling. 'Ser-163' may not serve as a monoubiquitination site. Ubiquitination on 'Ser-163' may modulate phosphorylation on C-terminal serine residues. Post-translationally, hydroxylated by PHD1/EGLN2, loss of hydroxylation under hypoxic conditions results in activation of NF-kappa-B.

Its subcellular location is the cytoplasm. The protein localises to the nucleus. The protein resides in the membrane raft. It carries out the reaction L-seryl-[I-kappa-B protein] + ATP = O-phospho-L-seryl-[I-kappa-B protein] + ADP + H(+). The catalysed reaction is L-seryl-[protein] + ATP = O-phospho-L-seryl-[protein] + ADP + H(+). It catalyses the reaction L-threonyl-[protein] + ATP = O-phospho-L-threonyl-[protein] + ADP + H(+). In terms of biological role, serine kinase that plays an essential role in the NF-kappa-B signaling pathway which is activated by multiple stimuli such as inflammatory cytokines, bacterial or viral products, DNA damages or other cellular stresses. Acts as a part of the canonical IKK complex in the conventional pathway of NF-kappa-B activation. Phosphorylates inhibitors of NF-kappa-B on 2 critical serine residues. These modifications allow polyubiquitination of the inhibitors and subsequent degradation by the proteasome. In turn, free NF-kappa-B is translocated into the nucleus and activates the transcription of hundreds of genes involved in immune response, growth control, or protection against apoptosis. In addition to the NF-kappa-B inhibitors, phosphorylates several other components of the signaling pathway including NEMO/IKBKG, NF-kappa-B subunits RELA and NFKB1, as well as IKK-related kinases TBK1 and IKBKE. IKK-related kinase phosphorylations may prevent the overproduction of inflammatory mediators since they exert a negative regulation on canonical IKKs. Phosphorylates FOXO3, mediating the TNF-dependent inactivation of this pro-apoptotic transcription factor. Also phosphorylates other substrates including NAA10, NCOA3, BCL10 and IRS1. Phosphorylates RIPK1 at 'Ser-25' which represses its kinase activity and consequently prevents TNF-mediated RIPK1-dependent cell death. Phosphorylates the C-terminus of IRF5, stimulating IRF5 homodimerization and translocation into the nucleus. This chain is Inhibitor of nuclear factor kappa-B kinase subunit beta (Ikbkb), found in Rattus norvegicus (Rat).